Reading from the N-terminus, the 1687-residue chain is Gag-Pol polyprotein (1687 aa).

A lipid anchor (N-myristoyl glycine; by host) is attached at glycine 2. 4 disordered regions span residues 107 to 126, 136 to 195, 420 to 447, and 466 to 485; these read GQDNGRKSAGGRPSAPSRLP, LLSE…STVA, HKRETEEEKQEREKKETEERERRRDRRQ, and GRQAGNLSNRAMRAPREGRP. The PTAP/PSAP motif signature appears at 108–111; that stretch reads QDNG. The span at 139–153 shows a compositional bias: pro residues; the sequence is EPPPYPTSPPPPPAP. The short motif at 140-143 is the PPXY motif element; sequence PPPY. A coiled-coil region spans residues 408 to 453; that stretch reads LQDLIKEAEKVYHKRETEEEKQEREKKETEERERRRDRRQEKNLTK. The segment at 490–507 adopts a CCHC-type zinc-finger fold; it reads DQCAYCKERGHWARECPR. Residues 544–614 form the Peptidase A2 domain; that stretch reads TEFLVDTGAE…CPAPLLGRDL (71 aa). The active-site Protease; shared with dimeric partner is aspartate 549. The Reverse transcriptase domain occupies 721–912; it reads LDLGILVPCQ…EEVTYLGYLL (192 aa). Mg(2+) contacts are provided by aspartate 789, aspartate 863, aspartate 864, aspartate 1162, glutamate 1200, aspartate 1221, and aspartate 1291. In terms of domain architecture, RNase H type-1 spans 1153-1299; it reads LPGVPAWYTD…ADEAAKQAAQ (147 aa). The HHCC-type zinc-finger motif lies at 1339–1377; the sequence is HQLTHLGPDKLLQLVGRTSFHIPNLQSVVREITSKCQVC. In terms of domain architecture, Integrase catalytic spans 1394–1552; it reads RGDRPGVYWE…TPYEILHGGP (159 aa). Mg(2+)-binding residues include aspartate 1405 and aspartate 1464.

In terms of assembly, homohexamer; further associates as homomultimer. The virus core is composed of a lattice formed from hexagonal rings, each containing six capsid monomers. As to quaternary structure, interacts (via PPXY motif) with host NEDD4. Interacts (via PSAP motif) with host TSG101. The reverse transcriptase is a monomer (Potential). Interacts (via RNase domains) with host release factor ETF1; this interaction is essential for translational readthrough of amber codon between viral gag and pol genes, as well as for viral replication. In terms of assembly, homodimer. It depends on Mg(2+) as a cofactor. Post-translationally, specific enzymatic cleavages by the viral protease yield mature proteins. The protease is released by autocatalytic cleavage. The polyprotein is cleaved during and after budding, this process is termed maturation. In terms of processing, phosphorylated on serine residues.

It is found in the virion. It localises to the host cell membrane. The protein resides in the host late endosome membrane. Its subcellular location is the host endosome. The protein localises to the host multivesicular body. It is found in the host cytoplasm. The enzyme catalyses DNA(n) + a 2'-deoxyribonucleoside 5'-triphosphate = DNA(n+1) + diphosphate. The catalysed reaction is Endonucleolytic cleavage to 5'-phosphomonoester.. With respect to regulation, protease: Most efficiently inhibited by Amprenavir, which is able to block Gag-Pol processing in infected cells. Plays a role in budding and is processed by the viral protease during virion maturation outside the cell. During budding, it recruits, in a PPXY-dependent or independent manner, Nedd4-like ubiquitin ligases that conjugate ubiquitin molecules to Gag-Pol, or to Gag-Pol binding host factors. Interaction with HECT ubiquitin ligases probably links the viral protein to the host ESCRT pathway and facilitates release. Functionally, targets Gag and gag-pol polyproteins to the plasma membrane via a multipartite membrane binding signal, that includes its myristoylated N-terminus. Also mediates nuclear localization of the pre-integration complex. Its function is as follows. Constituent of the pre-integration complex (PIC) which tethers the latter to mitotic chromosomes. This allows the integration of the viral genome into the host DNA. In terms of biological role, forms the spherical core of the virion that encapsulates the genomic RNA-nucleocapsid complex. Involved in the packaging and encapsidation of two copies of the genome. Binds with high affinity to conserved UCUG elements within the packaging signal, located near the 5'-end of the genome. This binding is dependent on genome dimerization. Acts as a nucleic acid chaperone which is involved in rearrangement of nucleic acid secondary structures during gRNA retrotranscription. Functionally, protease: The aspartyl protease mediates proteolytic cleavages of Gag and Gag-Pol polyproteins during or shortly after the release of the virion from the plasma membrane. Cleavages take place as an ordered, step-wise cascade to yield mature proteins. This process is called maturation. Displays maximal activity during the budding process just prior to particle release from the cell. Its function is as follows. Reverse transcriptase/ribonuclease H: RT is a multifunctional enzyme that converts the viral dimeric RNA genome into dsDNA in the cytoplasm, shortly after virus entry into the cell. This enzyme displays a DNA polymerase activity that can copy either DNA or RNA templates, and a ribonuclease H (RNase H) activity that cleaves the RNA strand of RNA-DNA heteroduplexes in a partially processive 3' to 5' endonucleasic mode. Conversion of viral genomic RNA into dsDNA requires many steps. A tRNA binds to the primer-binding site (PBS) situated at the 5' end of the viral RNA. RT uses the 3' end of the tRNA primer to perform a short round of RNA-dependent minus-strand DNA synthesis. The reading proceeds through the U5 region and ends after the repeated (R) region which is present at both ends of viral RNA. The portion of the RNA-DNA heteroduplex is digested by the RNase H, resulting in a ssDNA product attached to the tRNA primer. This ssDNA/tRNA hybridizes with the identical R region situated at the 3' end of viral RNA. This template exchange, known as minus-strand DNA strong stop transfer, can be either intra- or intermolecular. RT uses the 3' end of this newly synthesized short ssDNA to perform the RNA-dependent minus-strand DNA synthesis of the whole template. RNase H digests the RNA template except for a polypurine tract (PPT) situated at the 5' end of the genome. It is not clear if both polymerase and RNase H activities are simultaneous. RNase H probably can proceed both in a polymerase-dependent (RNA cut into small fragments by the same RT performing DNA synthesis) and a polymerase-independent mode (cleavage of remaining RNA fragments by free RTs). Secondly, RT performs DNA-directed plus-strand DNA synthesis using the PPT that has not been removed by RNase H as primers. PPT and tRNA primers are then removed by RNase H. The 3' and 5' ssDNA PBS regions hybridize to form a circular dsDNA intermediate. Strand displacement synthesis by RT to the PBS and PPT ends produces a blunt ended, linear dsDNA copy of the viral genome that includes long terminal repeats (LTRs) at both ends. In terms of biological role, catalyzes viral DNA integration into the host chromosome, by performing a series of DNA cutting and joining reactions. This enzyme activity takes place after virion entry into a cell and reverse transcription of the RNA genome in dsDNA. The first step in the integration process is 3' processing. This step requires a complex comprising the viral genome, matrix protein and integrase. This complex is called the pre-integration complex (PIC). The integrase protein removes 2 nucleotides from each 3' end of the viral DNA, leaving recessed CA OH's at the 3' ends. In the second step that requires cell division, the PIC enters cell nucleus. In the third step, termed strand transfer, the integrase protein joins the previously processed 3' ends to the 5' ends of strands of target cellular DNA at the site of integration. The last step is viral DNA integration into host chromosome. This chain is Gag-Pol polyprotein (pro-pol), found in Phascolarctos cinereus (Koala).